A 227-amino-acid chain; its full sequence is PKHD-type hydroxylase ACIAD0531 (227 aa).

The region spanning 78–178 is the Fe2OG dioxygenase domain; the sequence is HIIPPLFNRY…RFASFFWVQS (101 aa). Positions 96, 98, and 159 each coordinate Fe cation. Arginine 169 provides a ligand contact to 2-oxoglutarate.

It depends on Fe(2+) as a cofactor. L-ascorbate is required as a cofactor.

In Acinetobacter baylyi (strain ATCC 33305 / BD413 / ADP1), this protein is PKHD-type hydroxylase ACIAD0531.